The sequence spans 714 residues: Calpain-1 catalytic subunit (714 aa).

A Calpain catalytic domain is found at 55–354 (LFRDEAFPPV…FTRLEICNLT (300 aa)). 2 residues coordinate Ca(2+): glutamine 109 and aspartate 114. Residues cysteine 115, histidine 272, and asparagine 296 contribute to the active site. Ca(2+) is bound by residues serine 316, aspartate 318, and glutamate 323. Threonine 354 is modified (phosphothreonine). Residues 355–526 (PDALKSRTIR…KSAGTAELDD (172 aa)) form a domain III region. The interval 527–542 (QIQANLPDEQVLSEEE) is linker. 4 EF-hand domains span residues 541–576 (EEIDENFKALFRQLAGEDMEISVKELRTILNRIISK), 585–618 (FSLESCRSMVNLMDRDGNGKLGLVEFNILWNRIR), 615–650 (NRIRNYLSIFRKFDLDKSGSMSAYEMRMAIESAGFK), and 680–714 (VRLETMFRFFKTLDTDLDGVVTFDLFKWLQLTMFA). The segment at 543 to 713 (IDENFKALFR…LFKWLQLTMF (171 aa)) is domain IV. Residues aspartate 598, aspartate 600, asparagine 602, lysine 604, glutamate 609, aspartate 628, aspartate 630, serine 632, serine 634, and glutamate 639 each contribute to the Ca(2+) site.

The protein belongs to the peptidase C2 family. In terms of assembly, forms a heterodimer with a small (regulatory) subunit (CAPNS1). Ca(2+) serves as cofactor. Post-translationally, undergoes calcium-induced successive autoproteolytic cleavages that generate a membrane-bound 78 kDa active form and an intracellular 75 kDa active form. Calpastatin reduces with high efficiency the transition from 78 kDa to 75 kDa calpain forms. As to expression, ubiquitous.

The protein resides in the cytoplasm. It localises to the cell membrane. The enzyme catalyses Broad endopeptidase specificity.. Its activity is regulated as follows. Activated by micromolar concentrations of calcium and inhibited by calpastatin. Its function is as follows. Calcium-regulated non-lysosomal thiol-protease which catalyze limited proteolysis of substrates involved in cytoskeletal remodeling and signal transduction. Proteolytically cleaves CTBP1. Cleaves and activates caspase-7 (CASP7). This is Calpain-1 catalytic subunit (CAPN1) from Macaca fascicularis (Crab-eating macaque).